The sequence spans 233 residues: Glycerol-3-phosphate acyltransferase 5 (233 aa).

A run of 5 helical transmembrane segments spans residues 3 to 23 (LVFI…MAYL), 69 to 89 (MILL…VGLF), 116 to 136 (LVMA…FGLF), 143 to 163 (VFLG…FFGI), and 168 to 188 (TISW…LMAP).

Belongs to the PlsY family. As to quaternary structure, probably interacts with PlsX.

The protein localises to the cell membrane. The catalysed reaction is an acyl phosphate + sn-glycerol 3-phosphate = a 1-acyl-sn-glycero-3-phosphate + phosphate. Its pathway is lipid metabolism; phospholipid metabolism. In terms of biological role, catalyzes the transfer of an acyl group from acyl-phosphate (acyl-PO(4)) to glycerol-3-phosphate (G3P) to form lysophosphatidic acid (LPA). This enzyme utilizes acyl-phosphate as fatty acyl donor, but not acyl-CoA or acyl-ACP. In Dehalococcoides mccartyi (strain ATCC BAA-2266 / KCTC 15142 / 195) (Dehalococcoides ethenogenes (strain 195)), this protein is Glycerol-3-phosphate acyltransferase 5.